The chain runs to 53 residues: uncharacterized protein (53 aa).

The protein resides in the mitochondrion matrix. The protein localises to the kinetoplast. This is an uncharacterized protein from Trypanosoma brucei brucei.